Consider the following 583-residue polypeptide: uncharacterized protein (583 aa).

The FAD-binding FR-type domain maps to 162–424; the sequence is YGIFAAPILD…RGVQQNPFAK (263 aa).

The protein belongs to the flavoprotein pyridine nucleotide cytochrome reductase family. It depends on FAD as a cofactor.

It is found in the mitochondrion. This is an uncharacterized protein from Schizosaccharomyces pombe (strain 972 / ATCC 24843) (Fission yeast).